Consider the following 2615-residue polypeptide: Polycystin-1-like protein 1 (2615 aa).

Topologically, residues Met1–His1524 are extracellular. A disordered region spans residues Ile17–Pro93. 7 N-linked (GlcNAc...) asparagine glycosylation sites follow: Asn224, Asn297, Asn306, Asn390, Asn440, Asn534, and Asn619. 2 consecutive PKD domains span residues Ser291–Arg373 and Met375–Pro456. The REJ domain occupies Cys457–Asn1349. The disordered stretch occupies residues Ser749–Leu815. Residues Ala778–Ser789 are compositionally biased toward polar residues. One can recognise a GAIN-B domain in the interval Arg1364–Thr1512. N-linked (GlcNAc...) asparagine glycosylation is present at Asn1458. Cys1468 and Cys1494 are disulfide-bonded. The tract at residues Cys1468–Thr1512 is GPS. The N-linked (GlcNAc...) asparagine glycan is linked to Asn1510. Residues Pro1525 to Val1545 traverse the membrane as a helical segment. The Cytoplasmic segment spans residues Ser1546–Gln1732. The PLAT domain maps to Gln1573–Phe1690. The helical transmembrane segment at Arg1733–Val1753 threads the bilayer. The Extracellular segment spans residues Arg1754–Pro1772. The helical transmembrane segment at Phe1773–Leu1793 threads the bilayer. Residues Phe1794–Cys1905 lie on the Cytoplasmic side of the membrane. The disordered stretch occupies residues Ser1807 to Ser1840. The chain crosses the membrane as a helical span at residues Leu1906–Leu1926. At Gly1927–Ser1950 the chain is on the extracellular side. Residues Leu1951–Ala1971 form a helical membrane-spanning segment. Over Trp1972–Gln2057 the chain is Cytoplasmic. The helical transmembrane segment at Ala2058 to Tyr2078 threads the bilayer. Residues Gly2079–Tyr2288 lie on the Extracellular side of the membrane. A helical transmembrane segment spans residues Leu2289–Leu2309. The Cytoplasmic portion of the chain corresponds to Trp2310–Met2332. The helical transmembrane segment at Val2333–Ile2353 threads the bilayer. Over Thr2354–Arg2379 the chain is Extracellular. Residues Cys2380–Leu2400 form a helical membrane-spanning segment. Residues Ser2401–Pro2405 lie on the Cytoplasmic side of the membrane. A helical transmembrane segment spans residues Phe2406–Ala2426. The Extracellular portion of the chain corresponds to Ala2427–Thr2483. A helical transmembrane segment spans residues Leu2484–Phe2504. The Cytoplasmic segment spans residues Gln2505–Glu2615. The tract at residues Arg2589–Glu2615 is disordered.

This sequence belongs to the polycystin family. As to quaternary structure, heterodimer. Interacts with PKD2 to form a calcium channel. Interacts with PKD2L1; to form ciliary calcium channel. May interact with GNA12, GNAS, GNAI1 and GNAI2. In terms of tissue distribution, in testis, strong expression in Leydig cells, low level in seminal ducts, myoid cells and tunica vaginalis. Other tissues, including adrenal gland and heart myocardium, also show low expression. In embryo, highly expressed in the node.

The protein localises to the cell projection. It localises to the cilium membrane. In terms of biological role, component of a calcium-permeant ion channel formed by PKD1L2 and PKD1L1 in primary cilia, where it controls cilium calcium concentration, without affecting cytoplasmic calcium concentration, and regulates sonic hedgehog/SHH signaling and GLI2 transcription. The PKD1L1:PKD2L1 channel complex is mechanosensitive only at high pressures and is highly temperature sensitive. Also involved in left/right axis specification downstream of nodal flow by forming a complex with PKD2 in cilia to facilitate flow detection in left/right patterning. May function as a G-protein-coupled receptor. This chain is Polycystin-1-like protein 1, found in Mus musculus (Mouse).